We begin with the raw amino-acid sequence, 308 residues long: Reaction center protein M chain (308 aa).

Transmembrane regions (helical) follow at residues 54-80 (GSLGVLSLFSGLMWFFTIGIWFWYQAG), 111-140 (KEGGLWLIASFFMFVAVWSWWGRTYLRAQA), and 143-168 (MGKHTAWAFLSAIWLWMVLGFIRPIL). (7R,8Z)-bacteriochlorophyll b contacts are provided by H183 and H203. A helical transmembrane segment spans residues 198–226 (FYNPFHGLSIAFLYGSALLFAMHGATILA). The Fe cation site is built by H220 and E235. W253 contributes to the a ubiquinone binding site. Residues 260 to 286 (NATMEGIHRWAIWMAVLVTLTGGIGIL) form a helical membrane-spanning segment. H267 contacts Fe cation.

The protein belongs to the reaction center PufL/M/PsbA/D family. As to quaternary structure, reaction center is composed of four bacteriochlorophylls, two bacteriopheophytins, two ubiquinones, one iron, and three highly hydrophobic polypeptide chains (designated L, M, and H).

It localises to the cellular chromatophore membrane. The reaction center is a membrane-bound complex that mediates the initial photochemical event in the electron transfer process of photosynthesis. The polypeptide is Reaction center protein M chain (pufM) (Cereibacter sphaeroides (strain ATCC 17023 / DSM 158 / JCM 6121 / CCUG 31486 / LMG 2827 / NBRC 12203 / NCIMB 8253 / ATH 2.4.1.) (Rhodobacter sphaeroides)).